A 664-amino-acid chain; its full sequence is MARLVAVVKYSDEDYPFEKRQMPLYIDDSLTMVLEFSDNMLNLDKQQIDTVQLEQFIQHHKMLTEQDLTAALTVTSREVFNALSQLLPCVGCRRCVERLFSQVMQTGIQALDPLSVGANGVLTLSHSFMTDATKLYTLFYVCGSKLNSMIDTIAKNKKGKKNNRCKFHSLDVRKPKPLGGHWMDVWEVMSPECRDEVALIDSNCLLETLENYLQKHRFCADCKNKVHRAFNILTGELDFSKVKGYCANVYQGLRCCPHEGHIHLCCETDFIAHVLGRAEPEFAGGYERRERHAKTIDVAQEEVLTCLGIHLYERLHRIWLKLRAEVQTRQMLFYLGVDALRKSFEVTVEKVQGISRMDQYFKDILEEEKVQELKQEKKRQKKNRRKNKTSCDLPAPHETKSANASQNNDPPGFMESGGDSCNTSEDRNMCAEVTVKNEDLLRSHKMKKGLTPHSNVSDCGYSSSLEGSEPGSQEGSDVACAEGICKHDEAGDDEKDEEEGDSCVECWNNCTKDNIKGKSKKKKKKCKPFKCENENTLKQVPYNTESSDVHSNPNEENKVFNFCMDSEFPRRPWIYHRNEFFSDMSSSESQMRETKSLKELLDESECSSQEEDEITQDDIQAFKETYQTFYRDRQQFRQCLKENFKQFCLHRNPSLLVGKTGAIN.

Disordered stretches follow at residues 375–425 (QEKK…NTSE) and 447–476 (KKGL…QEGS). A compositionally biased stretch (basic residues) spans 376–388 (EKKRQKKNRRKNK). The segment covering 452–475 (PHSNVSDCGYSSSLEGSEPGSQEG) has biased composition (polar residues).

It is found in the cytoplasm. Functionally, may be involved in spermatogenesis. This Xenopus laevis (African clawed frog) protein is Gametogenetin-binding protein 2 (ggnbp2).